Consider the following 87-residue polypeptide: Small ribosomal subunit protein uS15c (87 aa).

It belongs to the universal ribosomal protein uS15 family. In terms of assembly, part of the 30S ribosomal subunit.

Its subcellular location is the plastid. It localises to the chloroplast. This Nymphaea alba (White water-lily) protein is Small ribosomal subunit protein uS15c (rps15).